The following is a 211-amino-acid chain: Ribosomal RNA large subunit methyltransferase E (211 aa).

Positions 55, 57, 75, 93, and 117 each coordinate S-adenosyl-L-methionine. The Proton acceptor role is filled by lysine 157.

It belongs to the class I-like SAM-binding methyltransferase superfamily. RNA methyltransferase RlmE family.

The protein resides in the cytoplasm. The enzyme catalyses uridine(2552) in 23S rRNA + S-adenosyl-L-methionine = 2'-O-methyluridine(2552) in 23S rRNA + S-adenosyl-L-homocysteine + H(+). Its function is as follows. Specifically methylates the uridine in position 2552 of 23S rRNA at the 2'-O position of the ribose in the fully assembled 50S ribosomal subunit. The polypeptide is Ribosomal RNA large subunit methyltransferase E (Methanothermobacter thermautotrophicus (strain ATCC 29096 / DSM 1053 / JCM 10044 / NBRC 100330 / Delta H) (Methanobacterium thermoautotrophicum)).